A 158-amino-acid polypeptide reads, in one-letter code: Large ribosomal subunit protein bL19 (158 aa).

The segment at 1–35 (MTADSKDTSMSEDNTETATAIENSSAMVTDVTSKS) is disordered. The segment covering 16–35 (ETATAIENSSAMVTDVTSKS) has biased composition (polar residues).

The protein belongs to the bacterial ribosomal protein bL19 family.

Its function is as follows. This protein is located at the 30S-50S ribosomal subunit interface and may play a role in the structure and function of the aminoacyl-tRNA binding site. The sequence is that of Large ribosomal subunit protein bL19 from Prochlorococcus marinus (strain MIT 9313).